A 334-amino-acid chain; its full sequence is uncharacterized protein (334 aa).

The next 2 membrane-spanning stretches (helical) occupy residues 1–21 (MFRL…FTFI) and 46–66 (ILGL…IIII).

The protein resides in the cell membrane. This is an uncharacterized protein from Rickettsia prowazekii (strain Madrid E).